We begin with the raw amino-acid sequence, 873 residues long: Bifunctional uridylyltransferase/uridylyl-removing enzyme (873 aa).

Residues 1–332 form a uridylyltransferase region; sequence MAFQSPLTFN…NGGETEPAVI (332 aa). The uridylyl-removing stretch occupies residues 333 to 692; sequence INEDFQRRGR…MSKKATRGGT (360 aa). An HD domain is found at 451–573; sequence VDEHSVRLLN…VRDEERLEYL (123 aa). 2 ACT domains span residues 693–773 and 800–873; these read EVFV…VKTR and LMEL…ELAP.

This sequence belongs to the GlnD family. Requires Mg(2+) as cofactor.

The enzyme catalyses [protein-PII]-L-tyrosine + UTP = [protein-PII]-uridylyl-L-tyrosine + diphosphate. It catalyses the reaction [protein-PII]-uridylyl-L-tyrosine + H2O = [protein-PII]-L-tyrosine + UMP + H(+). Uridylyltransferase (UTase) activity is inhibited by glutamine, while glutamine activates uridylyl-removing (UR) activity. Modifies, by uridylylation and deuridylylation, the PII regulatory proteins (GlnB and homologs), in response to the nitrogen status of the cell that GlnD senses through the glutamine level. Under low glutamine levels, catalyzes the conversion of the PII proteins and UTP to PII-UMP and PPi, while under higher glutamine levels, GlnD hydrolyzes PII-UMP to PII and UMP (deuridylylation). Thus, controls uridylylation state and activity of the PII proteins, and plays an important role in the regulation of nitrogen assimilation and metabolism. This chain is Bifunctional uridylyltransferase/uridylyl-removing enzyme, found in Vibrio vulnificus (strain CMCP6).